Here is a 120-residue protein sequence, read N- to C-terminus: NAD(P)H-quinone oxidoreductase subunit 3, chloroplastic (120 aa).

The next 3 helical transmembrane spans lie at Ile-9–Gly-29, Met-64–Met-84, and Val-88–Leu-108.

Belongs to the complex I subunit 3 family. As to quaternary structure, NDH is composed of at least 16 different subunits, 5 of which are encoded in the nucleus.

It localises to the plastid. The protein resides in the chloroplast thylakoid membrane. It carries out the reaction a plastoquinone + NADH + (n+1) H(+)(in) = a plastoquinol + NAD(+) + n H(+)(out). The enzyme catalyses a plastoquinone + NADPH + (n+1) H(+)(in) = a plastoquinol + NADP(+) + n H(+)(out). In terms of biological role, NDH shuttles electrons from NAD(P)H:plastoquinone, via FMN and iron-sulfur (Fe-S) centers, to quinones in the photosynthetic chain and possibly in a chloroplast respiratory chain. The immediate electron acceptor for the enzyme in this species is believed to be plastoquinone. Couples the redox reaction to proton translocation, and thus conserves the redox energy in a proton gradient. This is NAD(P)H-quinone oxidoreductase subunit 3, chloroplastic from Arabidopsis thaliana (Mouse-ear cress).